Reading from the N-terminus, the 99-residue chain is uncharacterized protein (99 aa).

The stretch at 43–95 (ENEEIYADQVRRIKLRLRELRETYATSEDNWRELMDNLEELRDQIERLAIRGG) forms a coiled coil.

This is an uncharacterized protein from Archaeoglobus fulgidus (strain ATCC 49558 / DSM 4304 / JCM 9628 / NBRC 100126 / VC-16).